Consider the following 261-residue polypeptide: CD40 ligand (261 aa).

Topologically, residues 1-22 (MIETYNQPVPRSAATGPPVSMK) are cytoplasmic. A helical; Signal-anchor for type II membrane protein membrane pass occupies residues 23-43 (IFMYLLTVFLITQMIGSALFA). Topologically, residues 44-261 (VYLHRRLDKI…GFTSFGLLKL (218 aa)) are extracellular. The 140-residue stretch at 122 to 261 (IAAHVISEAS…GFTSFGLLKL (140 aa)) folds into the THD domain. Residues C178 and C218 are joined by a disulfide bond. N-linked (GlcNAc...) asparagine glycosylation is present at N240.

Belongs to the tumor necrosis factor family. Homotrimer. Interacts with CD28. CD40 ligand, soluble form: Exists as either a monomer or a homotrimer. Forms a ternary complex between CD40 and integrins for CD40-CD40LG signaling. The soluble form derives from the membrane form by proteolytic processing.

The protein resides in the cell membrane. It localises to the cell surface. Its subcellular location is the secreted. Cytokine that acts as a ligand to CD40/TNFRSF5. Costimulates T-cell proliferation and cytokine production. Its cross-linking on T-cells generates a costimulatory signal which enhances the production of IL4 and IL10 in conjunction with the TCR/CD3 ligation and CD28 costimulation. Induces the activation of NF-kappa-B. Induces the activation of kinases MAPK8 and PAK2 in T-cells. Mediates B-cell proliferation in the absence of co-stimulus as well as IgE production in the presence of IL4. Involved in immunoglobulin class switching. Its function is as follows. Acts as a ligand for integrins, specifically ITGA5:ITGB1 and ITGAV:ITGB3; both integrins and the CD40 receptor are required for activation of CD40-CD40LG signaling, which have cell-type dependent effects, such as B-cell activation, NF-kappa-B signaling and anti-apoptotic signaling. The sequence is that of CD40 ligand (CD40LG) from Callithrix jacchus (White-tufted-ear marmoset).